Consider the following 89-residue polypeptide: UPF0335 protein RPE_4107 (89 aa).

Belongs to the UPF0335 family.

The protein is UPF0335 protein RPE_4107 of Rhodopseudomonas palustris (strain BisA53).